A 67-amino-acid chain; its full sequence is MPKMKTRKTAAKRFHVTGTGKIMRSKGMKSHLRRNKSARVLRQFDEMSQVAGVDRARIQKLIPYGVS.

It belongs to the bacterial ribosomal protein bL35 family.

This is Large ribosomal subunit protein bL35 from Dehalococcoides mccartyi (strain ATCC BAA-2100 / JCM 16839 / KCTC 5957 / BAV1).